The following is a 757-amino-acid chain: Probable tRNA (uracil-O(2)-)-methyltransferase (757 aa).

Disordered stretches follow at residues 55–93 (EARG…GPEQ) and 108–138 (QQEE…GDFP). Positions 72-84 (PGPGQGSPGGGPG) are enriched in gly residues. Position 78 is a phosphoserine (S78). A compositionally biased stretch (basic and acidic residues) spans 123 to 136 (DSGHPGHAEGREGD). A Phosphoserine modification is found at S533. The C3H1-type zinc-finger motif lies at 713–743 (ACKTRLCWFFMHHPDGCALSTDCCPFAHGPA).

This sequence belongs to the TRM44 family.

It localises to the cytoplasm. It catalyses the reaction uridine(44) in tRNA(Ser) + S-adenosyl-L-methionine = 2'-O-methyluridine(44) in tRNA(Ser) + S-adenosyl-L-homocysteine + H(+). Its function is as follows. Probable adenosyl-L-methionine (AdoMet)-dependent tRNA (uracil-O(2)-)-methyltransferase. The chain is Probable tRNA (uracil-O(2)-)-methyltransferase (TRMT44) from Homo sapiens (Human).